Consider the following 336-residue polypeptide: Alcohol dehydrogenase, propanol-preferring (336 aa).

Residues C37, H58, C89, C92, C95, C103, and C145 each contribute to the Zn(2+) site.

The protein belongs to the zinc-containing alcohol dehydrogenase family. Zn(2+) is required as a cofactor.

It carries out the reaction a primary alcohol + NAD(+) = an aldehyde + NADH + H(+). It catalyses the reaction a secondary alcohol + NAD(+) = a ketone + NADH + H(+). Its function is as follows. Preferred specificity is towards 1-propanol. The chain is Alcohol dehydrogenase, propanol-preferring (adhP) from Escherichia coli (strain K12).